Reading from the N-terminus, the 376-residue chain is Heme-dependent oxidative N-demethylase gamma subunit (376 aa).

The heme-dependent oxidative N-demethylase (HODM) is a heterotetramer composed of a catalytic alpha subunit, a FMN/2Fe-2S-dependent oxidoreductase beta subunit, a gamma subunit with putative aminotransferase activity, and a delta subunit of unknown function.

Functionally, component of the heme-dependent oxidative N-demethylase (HODM) enzyme, that catalyzes the NADPH-dependent oxidation of dimethylamine (DMA) to methylamine (MA) and formaldehyde. Functions in bacterial methylated amine catabolism, linking alkylamine oxidation to the tetrahydrofolate C1 pool. The gamma subunit of HODM may act as an aminomethyltransferase involved in the detoxification of formaldehyde released by the alpha subunit; this process requires tetrahydrofolate (THF). This is Heme-dependent oxidative N-demethylase gamma subunit from Ectopseudomonas mendocina (strain ymp) (Pseudomonas mendocina).